The sequence spans 658 residues: Threonine--tRNA ligase (658 aa).

Positions M1–T64 constitute a TGS domain. A catalytic region spans residues D246 to P549. Zn(2+)-binding residues include C343, H394, and H526.

It belongs to the class-II aminoacyl-tRNA synthetase family. In terms of assembly, homodimer. Zn(2+) is required as a cofactor.

The protein localises to the cytoplasm. It catalyses the reaction tRNA(Thr) + L-threonine + ATP = L-threonyl-tRNA(Thr) + AMP + diphosphate + H(+). Its function is as follows. Catalyzes the attachment of threonine to tRNA(Thr) in a two-step reaction: L-threonine is first activated by ATP to form Thr-AMP and then transferred to the acceptor end of tRNA(Thr). Also edits incorrectly charged L-seryl-tRNA(Thr). The sequence is that of Threonine--tRNA ligase from Mesorhizobium japonicum (strain LMG 29417 / CECT 9101 / MAFF 303099) (Mesorhizobium loti (strain MAFF 303099)).